The primary structure comprises 378 residues: Leukocyte elastase inhibitor (378 aa).

N-acetylmethionine is present on Met-1. Residue Lys-137 is modified to N6-acetyllysine. Residue Ser-299 is modified to Phosphoserine. A CARD-binding motif (CBM) region spans residues 350 to 378; the sequence is DFIADHPFIFFIRHNPSSNILFLGRLSSP.

The protein belongs to the serpin family. Ov-serpin subfamily. In terms of assembly, monomer. Interacts (via C-terminus) with CASP1; CASP4 (via CARD domain) and CASP5; these interactions regulate the activity of inflammatory caspases. Interacts with PRTN3. Interacts with GZMH.

The protein resides in the secreted. The protein localises to the cytoplasm. Its subcellular location is the cytolytic granule. It localises to the early endosome. In terms of biological role, neutrophil serine protease inhibitor that plays an essential role in the regulation of the innate immune response, inflammation and cellular homeostasis. Acts primarily to protect the cell from proteases released in the cytoplasm during stress or infection. These proteases are important in killing microbes but when released from granules, these potent enzymes also destroy host proteins and contribute to mortality. Regulates the activity of the neutrophil proteases elastase, cathepsin G, proteinase-3, chymase, chymotrypsin, and kallikrein-3. Also acts as a potent intracellular inhibitor of GZMH by directly blocking its proteolytic activity. During inflammation, limits the activity of inflammatory caspases CASP1, CASP4 and CASP5 by suppressing their caspase-recruitment domain (CARD) oligomerization and enzymatic activation. When secreted, promotes the proliferation of beta-cells via its protease inhibitory function. May be cleaved leading to a loss of its anti-protease activity and to the appearance of an endonuclease activity. However no catalytic site was identified. The chain is Leukocyte elastase inhibitor (SERPINB1) from Sus scrofa (Pig).